A 479-amino-acid chain; its full sequence is Inhibitory synaptic factor 2A (479 aa).

S177 is modified (phosphoserine). Disordered stretches follow at residues 226–247 and 315–338; these read GRAKQDRGRPNSEEPAPPALRR and SPECSEQPSQTHTPPGLGNQPSPT. The segment covering 228-237 has biased composition (basic and acidic residues); sequence AKQDRGRPNS. Positions 318–337 are enriched in polar residues; it reads CSEQPSQTHTPPGLGNQPSP. Residues 353 to 379 adopt a coiled-coil conformation; sequence TEVVDLKAQLQMMENLISSSQETIKVL. A compositionally biased stretch (polar residues) spans 449–461; it reads SPYSQETYSSTPK. A disordered region spans residues 449–472; sequence SPYSQETYSSTPKQKSKTESKKHG.

Belongs to the INSYN2 family. Interacts with GPHN.

The protein resides in the postsynaptic density. Component of the protein machinery at the inhibitory synapses, probably acting as a scaffold. Inhibitory synapses dampen neuronal activity through postsynaptic hyperpolarization. This synaptic inhibition is fundamental for the functioning of the central nervous system, shaping and orchestrating the flow of information through neuronal networks to generate a precise neural code. The chain is Inhibitory synaptic factor 2A from Homo sapiens (Human).